A 224-amino-acid chain; its full sequence is Phosphoglycolate phosphatase (224 aa).

Asp8 (nucleophile) is an active-site residue. The Mg(2+) site is built by Asp8 and Asp10. Lys151 serves as a coordination point for substrate. Mg(2+) is bound by residues Asp174 and Asp178.

This sequence belongs to the archaeal SPP-like hydrolase family. Mg(2+) is required as a cofactor.

It catalyses the reaction 2-phosphoglycolate + H2O = glycolate + phosphate. Its function is as follows. Catalyzes the dephosphorylation of 2-phosphoglycolate. In Thermoplasma volcanium (strain ATCC 51530 / DSM 4299 / JCM 9571 / NBRC 15438 / GSS1), this protein is Phosphoglycolate phosphatase.